Reading from the N-terminus, the 326-residue chain is UDP-3-O-acylglucosamine N-acyltransferase (326 aa).

The active-site Proton acceptor is the His-225.

The protein belongs to the transferase hexapeptide repeat family. LpxD subfamily. As to quaternary structure, homotrimer.

The catalysed reaction is a UDP-3-O-[(3R)-3-hydroxyacyl]-alpha-D-glucosamine + a (3R)-hydroxyacyl-[ACP] = a UDP-2-N,3-O-bis[(3R)-3-hydroxyacyl]-alpha-D-glucosamine + holo-[ACP] + H(+). The protein operates within bacterial outer membrane biogenesis; LPS lipid A biosynthesis. In terms of biological role, catalyzes the N-acylation of UDP-3-O-acylglucosamine using 3-hydroxyacyl-ACP as the acyl donor. Is involved in the biosynthesis of lipid A, a phosphorylated glycolipid that anchors the lipopolysaccharide to the outer membrane of the cell. This Acidovorax ebreus (strain TPSY) (Diaphorobacter sp. (strain TPSY)) protein is UDP-3-O-acylglucosamine N-acyltransferase.